Consider the following 1755-residue polypeptide: Periplakin (1755 aa).

Over residues 1 to 11 (MHSLFRKRNKG) the composition is skewed to basic residues. The disordered stretch occupies residues 1–20 (MHSLFRKRNKGKYSPTVQTR). Phosphoserine is present on serine 14. 2 coiled-coil regions span residues 16–125 (TVQT…KQMY) and 182–387 (LAKD…QQVV). Spectrin repeat units follow at residues 214–315 (QDYM…SHLK), 321–483 (HQFH…HALQ), and 503–610 (RQLL…EKVD). The SH3 domain maps to 397-453 (LKPIPVEALCDFESDQGLISRGYSYTLQKNNGESWELTDSTGKKLAAPAVCFIIPPT). The residue at position 463 (serine 463) is a Phosphoserine. Coiled-coil stretches lie at residues 611 to 819 (VANR…RNSH) and 883 to 1644 (LSSG…SVAV). 4 positions are modified to phosphoserine: serine 885, serine 947, serine 1583, and serine 1656. The tract at residues 1556-1755 (ELDFLREENH…ELAVLVSGQK (200 aa)) is interacts with BFSP2 and VIM. 2 Plectin repeats span residues 1650 to 1684 (ENHLRRSIVVIDPDTGRELSPEEAHRAGLIDWKMF) and 1699 to 1734 (VKGPNGESSVIHDRKSGKKFSIEDALQSGRLTAAQY).

Belongs to the plakin or cytolinker family. Homodimer or a heterodimer with EVPL. Found in a complex composed of PPL (via C-terminal linker domain), BFSP1 and BFSP2 in the retinal lens. Within the complex interacts (via C-terminal linker domain) with BFSP2. Interacts with VIM. Binds to the PH domain of AKT1. Interacts with FCGR1A. May interact with PPHLN1. In terms of tissue distribution, expressed in the retinal lens (at protein level).

The protein resides in the cell junction. The protein localises to the desmosome. Its subcellular location is the cytoplasm. It is found in the cytoskeleton. It localises to the cell membrane. Its function is as follows. Component of the cornified envelope of keratinocytes. May link the cornified envelope to desmosomes and intermediate filaments. May act as a localization signal in PKB/AKT-mediated signaling. The chain is Periplakin (Ppl) from Mus musculus (Mouse).